The primary structure comprises 736 residues: MKFSRFIPRSRTPGLPAYGEQEPNTFENGYRPSPPPGAITPYLGLRSRLSQIWFNRWTILLLLILARVLVAIGSLDGNLVSAKREALSACSSVESVGSTMASMPHYMAQGVNELTATGVEKAINGLMSMLELTVTGVEEIFVFFVNVMTQTYLCLITLVVSGMMNAAIDVLKKATEFLDDITGKLGNAIGDGISDFEDAINGFGDVINMFGTKLPKLNLDGPIKELENLSLPDGLTDDLNKLKEKIPNFEDVNNFTNNALRMPFELVKKLIRDEIDDYKFDRSVFPVPAKEQLQFCNEEGGIHSFFNKLASLTSTAKKIFIGVLVVSAILVCIPMAYREMRAWRGMKERSSLVRREAHDPMDVVYIVSRPFASAAGLKAATWFSGHRRQVLARWVVAYVTSPPALFLLSLGVAGLFSCACQAMLLTAVKKEVPSLTEQVGQFADKVFFALNNASEQWAVGTNRVIDDTNDDINQKVFGWVNQTTGSVNNTLNVFVDETSNVLNRTFGGTILYEPIKDVLHCLIGLKIEGVQKALTWVSVHAKVDFPNLANDTFSLRTLEKLSKDNDSNADSFLMNPGDKTTDKISEVVQRVTDSVESGIRTEAIISAVIISIWFAVLLMAIVRALTLWYGADKNRGDGSGDSEFPHPETLSRDAAGFSDIPLATPTHVSPGMADTSVPVYTTRPPAQAFNGGYNAEDYYQEQKLGFAGQRELRRDVEGHARKSSYGEVEYTNDVKR.

Positions 1–33 (MKFSRFIPRSRTPGLPAYGEQEPNTFENGYRPS) are disordered. Topologically, residues 1 to 56 (MKFSRFIPRSRTPGLPAYGEQEPNTFENGYRPSPPPGAITPYLGLRSRLSQIWFNR) are extracellular. Residues 57-77 (WTILLLLILARVLVAIGSLDG) traverse the membrane as a helical segment. Residues 78-139 (NLVSAKREAL…LELTVTGVEE (62 aa)) are Cytoplasmic-facing. Residues 140–160 (IFVFFVNVMTQTYLCLITLVV) traverse the membrane as a helical segment. Residues 161 to 315 (SGMMNAAIDV…FNKLASLTST (155 aa)) are Extracellular-facing. N-linked (GlcNAc...) asparagine glycosylation is found at Asn-228 and Asn-254. The chain crosses the membrane as a helical span at residues 316 to 336 (AKKIFIGVLVVSAILVCIPMA). The Cytoplasmic segment spans residues 337–395 (YREMRAWRGMKERSSLVRREAHDPMDVVYIVSRPFASAAGLKAATWFSGHRRQVLARWV). Residues 396-416 (VAYVTSPPALFLLSLGVAGLF) traverse the membrane as a helical segment. Over 417-601 (SCACQAMLLT…TDSVESGIRT (185 aa)) the chain is Extracellular. Asn-452, Asn-481, Asn-488, Asn-503, Asn-550, and Asn-565 each carry an N-linked (GlcNAc...) asparagine glycan. A helical transmembrane segment spans residues 602 to 622 (EAIISAVIISIWFAVLLMAIV). The Cytoplasmic segment spans residues 623–736 (RALTLWYGAD…EVEYTNDVKR (114 aa)). The disordered stretch occupies residues 717–736 (EGHARKSSYGEVEYTNDVKR).

The protein belongs to the PRM1 family.

The protein localises to the cell membrane. Involved in cell fusion during mating by stabilizing the plasma membrane fusion event. The polypeptide is Plasma membrane fusion protein PRM1 (PRM1) (Ajellomyces capsulatus (strain NAm1 / WU24) (Darling's disease fungus)).